The chain runs to 498 residues: Capsanthin/capsorubin synthase, chromoplastic (498 aa).

The N-terminal 52 residues, 1 to 52 (METLLKPFPSPLLSIPTPNMYSFKHNSTFPNPTKQKDSRKFHYRNKSSTHFC), are a transit peptide targeting the chromoplast. 84–112 (VIIIGTGPAGLRLAEQVSKYGIKVCCVDP) contributes to the NAD(+) binding site. The short motif at 293 to 297 (FLEET) is the FLEET motif element.

This sequence belongs to the lycopene cyclase family. In terms of assembly, monomer. It depends on FAD as a cofactor. The cofactor is NADPH.

The protein resides in the plastid. It localises to the chromoplast. The catalysed reaction is all-trans-violaxanthin = all-trans-capsorubin. The enzyme catalyses all-trans-antheraxanthin = all-trans-capsanthin. It catalyses the reaction all-trans-violaxanthin = (5R,6S)-5,6-epoxi-capsanthin. It carries out the reaction (5R,6S)-5,6-epoxi-capsanthin = all-trans-capsorubin. It participates in carotenoid biosynthesis; capsanthin biosynthesis; capsanthin from antheraxanthin: step 1/1. Its pathway is carotenoid biosynthesis; capsorubin biosynthesis; capsorubin from violaxanthin: step 1/1. In terms of biological role, catalyzes the conversion of the ubiquitous 5,6-epoxycarotenoids, antheraxanthin and violaxanthin, into capsanthin and capsorubin, respectively. The protein is Capsanthin/capsorubin synthase, chromoplastic of Capsicum annuum (Capsicum pepper).